Reading from the N-terminus, the 968-residue chain is Probable histidine kinase 1 (968 aa).

2 coiled-coil regions span residues 89–120 (LLKE…FQDE) and 169–204 (KERA…QSHT). Residues 372 to 655 (TMSHEIRSPL…TFSFVLPCKI (284 aa)) form the Histidine kinase domain. His375 is modified (phosphohistidine; by autocatalysis). Residues 737 to 757 (STNSASTAHQSNGPSVSRTNK) form a disordered region. Residues 738 to 754 (TNSASTAHQSNGPSVSR) are compositionally biased toward polar residues. Positions 818–965 (KILLVEDNKV…NIKECLQQYL (148 aa)) constitute a Response regulatory domain. At Asp867 the chain carries 4-aspartylphosphate.

Post-translationally, activation probably requires a transfer of a phosphate group between a His in the transmitter domain and an Asp of the receiver domain.

It catalyses the reaction ATP + protein L-histidine = ADP + protein N-phospho-L-histidine.. Cytokinin receptor related to bacterial two-component regulators. Functions as a histidine kinase and transmits the stress signal to a downstream MAPK cascade. This is Probable histidine kinase 1 from Oryza sativa subsp. indica (Rice).